A 111-amino-acid chain; its full sequence is Protein BEX3 (111 aa).

Residues 1-63 (MANIHQENEE…RQINDGMGGD (63 aa)) are disordered. Residues 68 to 93 (EIFMEEMREIRRKLRELQLRNCLRIL) are interaction with p75NTR/NGFR. The interaction with 14-3-3 epsilon stretch occupies residues 68–111 (EIFMEEMREIRRKLRELQLRNCLRILMGELSNHHDHHDEFCLMP). Residues 77-87 (IRRKLRELQLR) carry the Nuclear export signal motif. Positions 100–104 (HHDHH) are his cluster. A Zn(2+)-binding site is contributed by Cys108.

The protein belongs to the BEX family. Self-associates. Binds to the DEATH domain of p75NTR/NGFR. Interacts with 14-3-3 epsilon (YWHAE). Interacts with DIABLO/SMAC. Ubiquitinated. Degraded by the proteasome. Found in ovarian granulosa cells, testis, prostate and seminal vesicle tissue. High levels also detected in liver.

The protein localises to the nucleus. The protein resides in the cytoplasm. It localises to the cytosol. May be a signaling adapter molecule involved in NGFR/p75NTR-mediated apoptosis induced by NGF. Plays a role in zinc-triggered neuronal death. In absence of reductive stress, acts as a pseudosubstrate for the CRL2(FEM1B) complex: associates with FEM1B via zinc, thereby preventing association between FEM1B and its substrates. The chain is Protein BEX3 from Homo sapiens (Human).